A 503-amino-acid chain; its full sequence is Aspartyl/glutamyl-tRNA(Asn/Gln) amidotransferase subunit B (503 aa).

Belongs to the GatB/GatE family. GatB subfamily. In terms of assembly, heterotrimer of A, B and C subunits.

The enzyme catalyses L-glutamyl-tRNA(Gln) + L-glutamine + ATP + H2O = L-glutaminyl-tRNA(Gln) + L-glutamate + ADP + phosphate + H(+). It carries out the reaction L-aspartyl-tRNA(Asn) + L-glutamine + ATP + H2O = L-asparaginyl-tRNA(Asn) + L-glutamate + ADP + phosphate + 2 H(+). Allows the formation of correctly charged Asn-tRNA(Asn) or Gln-tRNA(Gln) through the transamidation of misacylated Asp-tRNA(Asn) or Glu-tRNA(Gln) in organisms which lack either or both of asparaginyl-tRNA or glutaminyl-tRNA synthetases. The reaction takes place in the presence of glutamine and ATP through an activated phospho-Asp-tRNA(Asn) or phospho-Glu-tRNA(Gln). The protein is Aspartyl/glutamyl-tRNA(Asn/Gln) amidotransferase subunit B of Cereibacter sphaeroides (strain ATCC 17025 / ATH 2.4.3) (Rhodobacter sphaeroides).